A 457-amino-acid polypeptide reads, in one-letter code: Glutamate--tRNA ligase 1 (457 aa).

The 'HIGH' region motif lies at 9 to 19; the sequence is PSPTGYIHIGN. Residues 250 to 254 carry the 'KMSKS' region motif; sequence GLSKR. ATP is bound at residue Lys-253.

It belongs to the class-I aminoacyl-tRNA synthetase family. Glutamate--tRNA ligase type 1 subfamily. In terms of assembly, monomer.

It is found in the cytoplasm. The catalysed reaction is tRNA(Glu) + L-glutamate + ATP = L-glutamyl-tRNA(Glu) + AMP + diphosphate. In terms of biological role, catalyzes the attachment of glutamate to tRNA(Glu) in a two-step reaction: glutamate is first activated by ATP to form Glu-AMP and then transferred to the acceptor end of tRNA(Glu). This is Glutamate--tRNA ligase 1 from Brucella abortus (strain S19).